Consider the following 123-residue polypeptide: PTS-dependent dihydroxyacetone kinase, phosphotransferase subunit DhaM (123 aa).

The PTS EIIA type-4 domain occupies 2-123 (TYGIVIVSHS…EQLEKMLIEK (122 aa)). The active-site Tele-phosphohistidine intermediate; for EIIA activity is His10.

As to quaternary structure, homodimer. The dihydroxyacetone kinase complex is composed of a homodimer of DhaM, a homodimer of DhaK and the subunit DhaL.

It carries out the reaction dihydroxyacetone + phosphoenolpyruvate = dihydroxyacetone phosphate + pyruvate. The protein operates within polyol metabolism; glycerol degradation. Functionally, component of the dihydroxyacetone kinase complex, which is responsible for the phosphoenolpyruvate (PEP)-dependent phosphorylation of dihydroxyacetone. DhaM serves as the phosphoryl donor. Is phosphorylated by phosphoenolpyruvate in an EI- and HPr-dependent reaction, and a phosphorelay system on histidine residues finally leads to phosphoryl transfer to DhaL and dihydroxyacetone. This Lactococcus lactis subsp. lactis (strain IL1403) (Streptococcus lactis) protein is PTS-dependent dihydroxyacetone kinase, phosphotransferase subunit DhaM.